A 653-amino-acid polypeptide reads, in one-letter code: Fructose-1,6-bisphosphatase class 3 2 (653 aa).

The protein belongs to the FBPase class 3 family. Mn(2+) serves as cofactor.

It catalyses the reaction beta-D-fructose 1,6-bisphosphate + H2O = beta-D-fructose 6-phosphate + phosphate. The protein operates within carbohydrate biosynthesis; gluconeogenesis. The protein is Fructose-1,6-bisphosphatase class 3 2 of Clostridium beijerinckii (strain ATCC 51743 / NCIMB 8052) (Clostridium acetobutylicum).